Reading from the N-terminus, the 204-residue chain is MSRGALIVFEGLDKSGKTTQCMNIMESIPSNTIKYLNFPQRSTVTGKMIDDYLTRKKTYNDHIVNLLFCANRWEFASFIQEQLEQGITLIVDRYAFSGVAYAAAKGASMTLSKSYESGLPKPDLVIFLESGSKEINRNVGEEIYEDVTFQQKVLQEYKKMIEEGDIHWQIISSEFEEDVKKELIKNIVIEAIHTVTGPVGQLWM.

11-18 lines the ATP pocket; that stretch reads GLDKSGKT.

The protein belongs to the thymidylate kinase family.

It catalyses the reaction dTMP + ATP = dTDP + ADP. It functions in the pathway pyrimidine metabolism; dTTP biosynthesis. In Rabbitpox virus (strain Utrecht) (RPV), this protein is Thymidylate kinase (TMK).